Consider the following 571-residue polypeptide: 15-cis-phytoene desaturase, chloroplastic/chromoplastic (571 aa).

The transit peptide at 1-96 (MDTGCLSSMN…FRNSERPSKP (96 aa)) directs the protein to the chloroplast and chromoplast. FAD contacts are provided by residues Ala-107, 126 to 127 (EA), Lys-134, 151 to 152 (HI), and Tyr-157. Arg-292 lines the substrate pocket. FAD contacts are provided by Ile-334 and Asp-523. Position 531 (Ala-531) interacts with substrate. Residue Met-533 participates in FAD binding.

It belongs to the carotenoid/retinoid oxidoreductase family. As to quaternary structure, homotetramer. It depends on FAD as a cofactor.

It is found in the plastid. Its subcellular location is the chloroplast. The protein resides in the chromoplast. The protein localises to the membrane. The catalysed reaction is 2 a plastoquinone + 15-cis-phytoene = 9,9',15-tri-cis-zeta-carotene + 2 a plastoquinol. Its pathway is carotenoid biosynthesis; lycopene biosynthesis. Converts phytoene into zeta-carotene via the intermediary of phytofluene by the symmetrical introduction of two double bonds at the C-11 and C-11' positions of phytoene with a concomitant isomerization of two neighboring double bonds at the C9 and C9' positions from trans to cis. The sequence is that of 15-cis-phytoene desaturase, chloroplastic/chromoplastic (PDS1) from Zea mays (Maize).